The primary structure comprises 152 residues: Siroheme decarboxylase beta subunit (152 aa).

It belongs to the Ahb/Nir family. As to quaternary structure, forms a heterodimer composed of AhbA and AhbB.

The enzyme catalyses siroheme + 2 H(+) = 12,18-didecarboxysiroheme + 2 CO2. It participates in porphyrin-containing compound metabolism; protoheme biosynthesis. Binds heme b. The redox state of the heme b modulates the activity of the enzyme. Activity is stimulated by sodium dithionite. Involved in siroheme-dependent heme b biosynthesis. Catalyzes the decarboxylation of siroheme into didecarboxysiroheme. The sequence is that of Siroheme decarboxylase beta subunit from Methanosarcina barkeri (strain Fusaro / DSM 804).